A 490-amino-acid chain; its full sequence is Cytochrome P450 2C55 (490 aa).

Cysteine 435 lines the heme pocket.

It belongs to the cytochrome P450 family. Heme serves as cofactor. In terms of tissue distribution, highest level in colon. Low levels in liver and small intestine.

It localises to the endoplasmic reticulum membrane. The protein resides in the microsome membrane. The enzyme catalyses an organic molecule + reduced [NADPH--hemoprotein reductase] + O2 = an alcohol + oxidized [NADPH--hemoprotein reductase] + H2O + H(+). Functionally, metabolizes arachidonic acid mainly to 19-hydroxyeicosatetraenoic acid (HETE). This Mus musculus (Mouse) protein is Cytochrome P450 2C55.